Consider the following 322-residue polypeptide: Methionyl-tRNA formyltransferase (322 aa).

Position 112-115 (112-115 (SLLP)) interacts with (6S)-5,6,7,8-tetrahydrofolate.

This sequence belongs to the Fmt family.

It carries out the reaction L-methionyl-tRNA(fMet) + (6R)-10-formyltetrahydrofolate = N-formyl-L-methionyl-tRNA(fMet) + (6S)-5,6,7,8-tetrahydrofolate + H(+). In terms of biological role, attaches a formyl group to the free amino group of methionyl-tRNA(fMet). The formyl group appears to play a dual role in the initiator identity of N-formylmethionyl-tRNA by promoting its recognition by IF2 and preventing the misappropriation of this tRNA by the elongation apparatus. This chain is Methionyl-tRNA formyltransferase, found in Synechococcus sp. (strain JA-2-3B'a(2-13)) (Cyanobacteria bacterium Yellowstone B-Prime).